Consider the following 520-residue polypeptide: Leucine carboxyl methyltransferase 1 (520 aa).

Disordered stretches follow at residues 1-116 (MQRD…DDAV) and 142-174 (TQEF…SIRR). Low complexity predominate over residues 79-89 (PSLRLSLGLPR). Polar residues-rich tracts occupy residues 95-110 (HSGQ…STAR) and 142-151 (TQEFSSTLPS). Residues Arg185, Gly210, Asp237, 305-306 (DV), and Glu343 each bind S-adenosyl-L-methionine.

It belongs to the methyltransferase superfamily. LCMT family.

It carries out the reaction [phosphatase 2A protein]-C-terminal L-leucine + S-adenosyl-L-methionine = [phosphatase 2A protein]-C-terminal L-leucine methyl ester + S-adenosyl-L-homocysteine. In terms of biological role, methylates the carboxyl group of the C-terminal leucine residue of protein phosphatase 2A catalytic subunits to form alpha-leucine ester residues. The polypeptide is Leucine carboxyl methyltransferase 1 (PPM1) (Mycosarcoma maydis (Corn smut fungus)).